Consider the following 93-residue polypeptide: Protamine-3 (93 aa).

Residues 1 to 93 (MGSRCAKLGT…QSPEPKQTRS (93 aa)) form a disordered region. The segment covering 37 to 57 (EGEEEEEGEEEEEEEGEEEEL) has biased composition (acidic residues). Residues 81–93 (EVQQSPEPKQTRS) show a composition bias toward polar residues. Position 85 is a phosphoserine (Ser-85).

It belongs to the protamine P3 family.

The protein resides in the nucleus. The protein localises to the chromosome. Functionally, protamines substitute for histones in the chromatin of sperm during the haploid phase of spermatogenesis. They compact sperm DNA into a highly condensed, stable and inactive complex. The sequence is that of Protamine-3 (PRM3) from Bos taurus (Bovine).